Here is a 473-residue protein sequence, read N- to C-terminus: Argininosuccinate lyase (473 aa).

Belongs to the lyase 1 family. Argininosuccinate lyase subfamily.

It is found in the cytoplasm. The catalysed reaction is 2-(N(omega)-L-arginino)succinate = fumarate + L-arginine. Its pathway is amino-acid biosynthesis; L-arginine biosynthesis; L-arginine from L-ornithine and carbamoyl phosphate: step 3/3. In Nocardia farcinica (strain IFM 10152), this protein is Argininosuccinate lyase.